An 84-amino-acid chain; its full sequence is Cell division topological specificity factor (84 aa).

This sequence belongs to the MinE family.

Its function is as follows. Prevents the cell division inhibition by proteins MinC and MinD at internal division sites while permitting inhibition at polar sites. This ensures cell division at the proper site by restricting the formation of a division septum at the midpoint of the long axis of the cell. The chain is Cell division topological specificity factor from Burkholderia cenocepacia (strain HI2424).